The sequence spans 416 residues: MQALVLLLWTGALLGFGRCQNAGQEAGSLTPESTGAPVEEEDPFFKVPVNKLAAAVSNFGYDLYRVRSGESPTANVLLSPLSVATALSALSLGAEQRTESNIHRALYYDLISNPDIHGTYKDLLASVTAPQKNLKSASRIIFERKLRIKASFIPPLEKSYGTRPRILTGNSRVDLQEINNWVQAQMKGKVARSTREMPSEISIFLLGVAYFKGQWVTKFDSRKTSLEDFYLDEERTVKVPMMSDPQAVLRYGLDSDLNCKIAQLPLTGSTSIIFFLPQKVTQNLTLIEESLTSEFIHDIDRELKTVQAVLTIPKLKLSYEGELTKSVQELKLQSLFDAPDFSKITGKPIKLTQVEHRVGFEWNEDGAGTNSSPGVQPARLTFPLDYHLNQPFIFVLRDTDTGALLFIGKILDPRGT.

The first 20 residues, 1–20 (MQALVLLLWTGALLGFGRCQ), serve as a signal peptide directing secretion. Residues serine 112 and serine 225 each carry the phosphoserine modification. An N-linked (GlcNAc...) asparagine glycan is attached at asparagine 283.

Belongs to the serpin family. In terms of assembly, interacts with PNPLA2; this interaction stimulates the phospholipase A2 activity of PNPLA2. Retinal pigment epithelial cells. Located in the interphotoreceptor matrix (IPM) which is between the retinal pigment epithelium and the neural retina.

It is found in the secreted. The protein localises to the melanosome. Neurotrophic protein; induces extensive neuronal differentiation in retinoblastoma cells. Potent inhibitor of angiogenesis. As it does not undergo the S (stressed) to R (relaxed) conformational transition characteristic of active serpins, it exhibits no serine protease inhibitory activity. In Bos taurus (Bovine), this protein is Pigment epithelium-derived factor (SERPINF1).